Consider the following 417-residue polypeptide: NADH-quinone oxidoreductase subunit D (417 aa).

Belongs to the complex I 49 kDa subunit family. NDH-1 is composed of 14 different subunits. Subunits NuoB, C, D, E, F, and G constitute the peripheral sector of the complex.

The protein localises to the cell inner membrane. The catalysed reaction is a quinone + NADH + 5 H(+)(in) = a quinol + NAD(+) + 4 H(+)(out). Functionally, NDH-1 shuttles electrons from NADH, via FMN and iron-sulfur (Fe-S) centers, to quinones in the respiratory chain. The immediate electron acceptor for the enzyme in this species is believed to be ubiquinone. Couples the redox reaction to proton translocation (for every two electrons transferred, four hydrogen ions are translocated across the cytoplasmic membrane), and thus conserves the redox energy in a proton gradient. This Janthinobacterium sp. (strain Marseille) (Minibacterium massiliensis) protein is NADH-quinone oxidoreductase subunit D.